A 713-amino-acid polypeptide reads, in one-letter code: Cadherin-13 (713 aa).

Positions 1–22 (MQPATPLVLCVLLSQVLLLTSA) are cleaved as a signal peptide. Positions 23–138 (EDLDCTPGFQ…RTSPVPRQKR (116 aa)) are excised as a propeptide. N-linked (GlcNAc...) asparagine glycans are attached at residues asparagine 52 and asparagine 86. Cadherin domains are found at residues 139-245 (SIVV…RPIF), 246-363 (REGP…SPKF), 364-477 (TKKE…SPVF), 478-585 (YPDP…APFI), and 584-694 (FIYP…AAGA). The interval 156 to 178 (PRDVGKVVDSDRPEGSKFRLTGK) is disordered. Basic and acidic residues predominate over residues 158–172 (DVGKVVDSDRPEGSK). N-linked (GlcNAc...) asparagine glycans are attached at residues asparagine 382, asparagine 489, asparagine 500, asparagine 530, asparagine 598, asparagine 638, and asparagine 671. Glycine 693 carries GPI-anchor amidated glycine lipidation. The propeptide at 694–713 (APHFSAATALLLSLFSLARL) is removed in mature form.

As to quaternary structure, by contrast to classical cadherins, homodimerization in trans is not mediated by cadherin EC1 domain strand-swapping, but instead through a homophilic adhesive interface which joins two elongated EC1-EC2 domains through a region near their Ca2+-binding sites to form a tetrahedral, X-like shape.

The protein resides in the cell membrane. Its subcellular location is the cytoplasm. Cadherins are calcium-dependent cell adhesion proteins. They preferentially interact with themselves in a homophilic manner in connecting cells; cadherins may thus contribute to the sorting of heterogeneous cell types. May act as a negative regulator of neural cell growth. This is Cadherin-13 (CDH13) from Bos taurus (Bovine).